The sequence spans 746 residues: WD repeat-containing protein 91 (746 aa).

The stretch at 183–215 (QRTNQVQEENEVLRQKLFALQAEIHRLKKEEQQ) forms a coiled coil. Position 256 is a phosphoserine (S256). Over residues 265–278 (LLPQSKKSPSRLSP) the composition is skewed to low complexity. Positions 265-336 (LLPQSKKSPS…QHRQRRLQDH (72 aa)) are disordered. Positions 282–299 (PPQTQSSAKKESFGSQTT) are enriched in polar residues. Phosphoserine is present on residues S288 and S293. 7 WD repeats span residues 405–444 (EHHSSIMHCRVDCSGRRVASLDVDGVIKVWSFNPIMQTKA), 447–487 (ISKS…NLCE), 514–554 (AASS…QQLQ), 559–598 (PEPIAINCTAFNHNGNLLVTGAADGVIRLFDMQQHECAMS), 601–640 (AHCGEVYSVEFSYDENTVYSIGEDGKFIQWNIHKSGLKVS), 663–701 (VQVPRGRLFAFDSEGNYMLTCSATGGVIYKLGGDDKVLE), and 708–746 (GHRAPVVTVDWSTAMDCGTCLTASMDGKIKLTTLLAHKV).

Belongs to the WD repeat WDR91 family. In terms of assembly, interacts with WDR81; involved in early to late endosome cargo transport. Interacts with BECN1; negatively regulates the PI3 kinase/PI3K activity associated with endosomal membranes.

It is found in the early endosome membrane. It localises to the late endosome membrane. Its function is as follows. Functions as a negative regulator of the PI3 kinase/PI3K activity associated with endosomal membranes via BECN1, a core subunit of the PI3K complex. By modifying the phosphatidylinositol 3-phosphate/PtdInsP3 content of endosomal membranes may regulate endosome fusion, recycling, sorting and early to late endosome transport. It is for instance, required for the delivery of cargos like BST2/tetherin from early to late endosome and thereby participates indirectly to their degradation by the lysosome. May play a role in meiosis. This chain is WD repeat-containing protein 91, found in Bos taurus (Bovine).